The following is a 326-amino-acid chain: MASCVVKNWQGETVGSAELSLKVARPETASHILYLALRRQMTNARQGNAHTKTRAEVRGGGRKPWRQKGTGRARAGSIRSPLWRKGGVIFGPRKREYNLAMNRKERQLALRTALQSRVEDLIVVEDFQDQLNPPKTRAVAQALLRWGVMEDQSALLIVAERSEAVERAVRNIARVKLIGLDQLNVFDLLNVDWVLITTSALEKLKARWGSGAAAAAPTQADRLEDQAQAAEREARPVEQAEGQSQEQEEQAEAQAQPEAPPAQADQANQVALANPQVQETQEEELAQAQEREVQGQAELAQEAEPLAQPPAGEEAETAAAEEEDND.

Residues 1 to 211 (MASCVVKNWQ…EKLKARWGSG (211 aa)) form a large ribosomal subunit protein uL4 region. Disordered regions lie at residues 44–76 (ARQG…ARAG) and 211–326 (GAAA…EDND). Basic residues predominate over residues 60–71 (GGRKPWRQKGTG). Residues 212–326 (AAAAAPTQAD…TAAAEEEDND (115 aa)) are unknown. Positions 221–238 (DRLEDQAQAAEREARPVE) are enriched in basic and acidic residues. Composition is skewed to low complexity over residues 252–279 (EAQA…QVQE) and 294–312 (QGQA…PPAG). Positions 313–326 (EEAETAAAEEEDND) are enriched in acidic residues.

The protein belongs to the universal ribosomal protein uL4 family. Part of the 50S ribosomal subunit.

One of the primary rRNA binding proteins, this protein initially binds near the 5'-end of the 23S rRNA. It is important during the early stages of 50S assembly. It makes multiple contacts with different domains of the 23S rRNA in the assembled 50S subunit and ribosome. In terms of biological role, forms part of the polypeptide exit tunnel. This Synechococcus sp. (strain JA-3-3Ab) (Cyanobacteria bacterium Yellowstone A-Prime) protein is Large ribosomal subunit protein uL4.